The primary structure comprises 448 residues: Probable glycine dehydrogenase (decarboxylating) subunit 1 (448 aa).

This sequence belongs to the GcvP family. N-terminal subunit subfamily. As to quaternary structure, the glycine cleavage system is composed of four proteins: P, T, L and H. In this organism, the P 'protein' is a heterodimer of two subunits.

The enzyme catalyses N(6)-[(R)-lipoyl]-L-lysyl-[glycine-cleavage complex H protein] + glycine + H(+) = N(6)-[(R)-S(8)-aminomethyldihydrolipoyl]-L-lysyl-[glycine-cleavage complex H protein] + CO2. Its function is as follows. The glycine cleavage system catalyzes the degradation of glycine. The P protein binds the alpha-amino group of glycine through its pyridoxal phosphate cofactor; CO(2) is released and the remaining methylamine moiety is then transferred to the lipoamide cofactor of the H protein. The polypeptide is Probable glycine dehydrogenase (decarboxylating) subunit 1 (Geobacillus kaustophilus (strain HTA426)).